The following is a 442-amino-acid chain: HTH-type transcriptional regulator NorG (442 aa).

The HTH gntR-type domain occupies 2 to 46 (KIPSQRQLAIQYNVNRVTIIKSIELLEAEGFIYTKVGSGTYVNDY). A DNA-binding region (H-T-H motif) is located at residues 6-25 (QRQLAIQYNVNRVTIIKSIE). Position 288 is an N6-(pyridoxal phosphate)lysine (Lys288).

It in the C-terminal section; belongs to the class-I pyridoxal-phosphate-dependent aminotransferase family. Pyridoxal 5'-phosphate is required as a cofactor.

In terms of biological role, positively regulates the expression of the NorB efflux pump and negatively regulates the expression of the AbcA efflux pump. Binds specifically to the promoters of norA, norB and norC and abcA genes. Could also have an aminotransferase activity. The polypeptide is HTH-type transcriptional regulator NorG (norG) (Staphylococcus aureus (strain bovine RF122 / ET3-1)).